A 401-amino-acid polypeptide reads, in one-letter code: MKLVEIAEDILSKANAYTNNTGLTSSQRFQLREEIRYQANGILSAIDGPEQTMKAIARSYTTCTALKVCVDLKLASHLPLSDARSLSQLAQICGCDSLVLRPMLRLLAKNGIFEQVDAETWQHTELSAVMAQPPFQALEEKYRSVAHLPRLLQAVSHQFPTPGRTAFNQVYCTSLDFYTYSNELDHAAARNFAFSMKELARNQIPFVQQSYPLETIDPESHFIDVAGGVGYLSFFLAGSFPKATFEVQDHPFIIEEAHSVCPSELRDRITFRAHNILHPQPEIAKEINGRLVFLVKIILHDHGDDDCRLMLRNLVSVMKQGDRILIIDTVIPETGGSLSSANSDIIIMSMFGSGHRTLEEFRALIHRCGEDLVIETFASGDEEYDGMMVIEVRKAEPVLDN.

Asp249 is a binding site for S-adenosyl-L-methionine. His300 acts as the Proton acceptor in catalysis.

It belongs to the class I-like SAM-binding methyltransferase superfamily. Cation-independent O-methyltransferase family.

The protein operates within mycotoxin biosynthesis. O-methyltransferase; part of the satratoxin SC3 cluster involved in the biosynthesis of satratoxins, trichothecene mycotoxins that are associated with human food poisonings. Satratoxins are suggested to be made by products of multiple gene clusters (SC1, SC2 and SC3) that encode 21 proteins in all, including polyketide synthases, acetyltransferases, and other enzymes expected to modify the trichothecene skeleton. SC1 encodes 10 proteins, SAT1 to SAT10. The largest are SAT8, which encodes a putative polyketide synthase (PKS) with a conventional non-reducing architecture, and SAT10, a putative protein containing four ankyrin repeats and thus may be involved in protein scaffolding. The putative short-chain reductase SAT3 may assist the PKS in some capacity. SAT6 contains a secretory lipase domain and acts probably as a trichothecene esterase. SAT5 encodes a putative acetyltransferase, and so, with SAT6, may affect endogenous protection from toxicity. The probable transcription factor SAT9 may regulate the expression of the SC1 cluster. SC2 encodes proteins SAT11 to SAT16, the largest of which encodes the putative reducing PKS SAT13. SAT11 is a cytochrome P450 monooxygenase, while SAT14 and SAT16 are probable acetyltransferases. The SC2 cluster may be regulated by the transcription factor SAT15. SC3 is a small cluster that encodes 5 proteins, SAT17 to SAT21. SAT21 is a putative MFS-type transporter which may have a role in exporting secondary metabolites. The four other proteins putatively encoded in SC3 include the taurine hydroxylase-like protein SAT17, the O-methyltransferase SAT18, the acetyltransferase SAT19, and the Cys6-type zinc finger SAT20, the latter being probably involved in regulation of SC3 expression. The protein is O-methyltransferase SAT18 of Stachybotrys chartarum (strain CBS 109288 / IBT 7711) (Toxic black mold).